Here is a 232-residue protein sequence, read N- to C-terminus: Large ribosomal subunit protein uL1 (232 aa).

The protein belongs to the universal ribosomal protein uL1 family. Part of the 50S ribosomal subunit.

Its function is as follows. Binds directly to 23S rRNA. The L1 stalk is quite mobile in the ribosome, and is involved in E site tRNA release. Functionally, protein L1 is also a translational repressor protein, it controls the translation of the L11 operon by binding to its mRNA. In Burkholderia multivorans (strain ATCC 17616 / 249), this protein is Large ribosomal subunit protein uL1.